The sequence spans 290 residues: Nucleotide-binding protein LAR_0375 (290 aa).

13 to 20 (GMSGAGKT) is a binding site for ATP. 63–66 (DMRS) contributes to the GTP binding site.

It belongs to the RapZ-like family.

In terms of biological role, displays ATPase and GTPase activities. The polypeptide is Nucleotide-binding protein LAR_0375 (Limosilactobacillus reuteri subsp. reuteri (strain JCM 1112) (Lactobacillus reuteri)).